Reading from the N-terminus, the 531-residue chain is Bifunctional aspartate aminotransferase and L-aspartate beta-decarboxylase (531 aa).

G114 and N255 together coordinate L-aspartate. K314 carries the N6-(pyridoxal phosphate)lysine modification. Residue R496 participates in L-aspartate binding.

This sequence belongs to the class-I pyridoxal-phosphate-dependent aminotransferase family. In terms of assembly, homododecamer. Requires pyridoxal 5'-phosphate as cofactor.

The enzyme catalyses L-aspartate + H(+) = L-alanine + CO2. The catalysed reaction is L-aspartate + 2-oxoglutarate = oxaloacetate + L-glutamate. Inhibited by 10 mM Co(2+), Mn(2+) and Ni(2+), and by 1 mM Cu(2+) and Hg(2+). Its function is as follows. Bifunctional enzyme that has both L-aspartate decarboxylase and transaminase activity. Has high activity with L-aspartate, and much lower activity with D-aspartate, L-lysine and L-glutamine. This is Bifunctional aspartate aminotransferase and L-aspartate beta-decarboxylase from Pseudomonas sp.